Here is a 79-residue protein sequence, read N- to C-terminus: uncharacterized protein (79 aa).

Positions 1-19 (MKYVALAFVLSLVILQISA) are cleaved as a signal peptide. Residues 52 to 71 (RGRKSRTQSGRNQGKSTSDS) form a disordered region. Positions 58–71 (TQSGRNQGKSTSDS) are enriched in polar residues.

In terms of tissue distribution, nacreous layer of shell (at protein level). Expressed primarily in the mantle with highest level in the mantle pallium and lower level in the mantle edge.

The protein resides in the secreted. This is an uncharacterized protein from Margaritifera margaritifera (Freshwater pearl mussel).